We begin with the raw amino-acid sequence, 380 residues long: Cytochrome b (380 aa).

A run of 4 helical transmembrane segments spans residues 33 to 53, 77 to 98, 113 to 133, and 178 to 198; these read FGSL…FLAM, WLIR…YLHI, WNVG…GYVL, and FFAF…LHFL. Residues His-83 and His-97 each contribute to the heme b site. Heme b-binding residues include His-182 and His-196. His-201 is a binding site for a ubiquinone. 4 helical membrane-spanning segments follow: residues 226–246, 288–308, 320–340, and 347–367; these read YKDL…SLFS, LGGV…PILH, LTQI…WIGG, and FIIV…VIMP.

Belongs to the cytochrome b family. In terms of assembly, the cytochrome bc1 complex contains 3 respiratory subunits (MT-CYB, CYC1 and UQCRFS1), 2 core proteins (UQCRC1 and UQCRC2) and probably 6 low-molecular weight proteins. Heme b is required as a cofactor.

It localises to the mitochondrion inner membrane. Its function is as follows. Component of the ubiquinol-cytochrome c reductase complex (complex III or cytochrome b-c1 complex) that is part of the mitochondrial respiratory chain. The b-c1 complex mediates electron transfer from ubiquinol to cytochrome c. Contributes to the generation of a proton gradient across the mitochondrial membrane that is then used for ATP synthesis. In Zeus faber (John Dory), this protein is Cytochrome b (mt-cyb).